The sequence spans 119 residues: Large ribosomal subunit protein uL18 (119 aa).

This sequence belongs to the universal ribosomal protein uL18 family. As to quaternary structure, part of the 50S ribosomal subunit; part of the 5S rRNA/L5/L18/L25 subcomplex. Contacts the 5S and 23S rRNAs.

Its function is as follows. This is one of the proteins that bind and probably mediate the attachment of the 5S RNA into the large ribosomal subunit, where it forms part of the central protuberance. The chain is Large ribosomal subunit protein uL18 from Malacoplasma penetrans (strain HF-2) (Mycoplasma penetrans).